We begin with the raw amino-acid sequence, 101 residues long: NADH-quinone oxidoreductase subunit K (101 aa).

The next 3 helical transmembrane spans lie at 4 to 24 (LAHYLVLGAILFAMSIVGIFL), 29 to 49 (IIIILMAIELMLLAVNTNFVA), and 61 to 81 (IFVFFVLTVAAAEAAIGLAIL).

The protein belongs to the complex I subunit 4L family. NDH-1 is composed of 14 different subunits. Subunits NuoA, H, J, K, L, M, N constitute the membrane sector of the complex.

The protein localises to the cell inner membrane. It catalyses the reaction a quinone + NADH + 5 H(+)(in) = a quinol + NAD(+) + 4 H(+)(out). NDH-1 shuttles electrons from NADH, via FMN and iron-sulfur (Fe-S) centers, to quinones in the respiratory chain. The immediate electron acceptor for the enzyme in this species is believed to be ubiquinone. Couples the redox reaction to proton translocation (for every two electrons transferred, four hydrogen ions are translocated across the cytoplasmic membrane), and thus conserves the redox energy in a proton gradient. The protein is NADH-quinone oxidoreductase subunit K of Burkholderia vietnamiensis (strain G4 / LMG 22486) (Burkholderia cepacia (strain R1808)).